A 448-amino-acid polypeptide reads, in one-letter code: MRNAWEVNFDGLVGLTHNYAGLLFGNEASTRHRFQVSNPRLAAKQGLLKMKNLADAGFPQAVIPPHERPFIPVLRQLGFSGSDEQVLEKVARQAPHWLSSVSSASPMWVANAATIAPSVDTLDGKVHRTVANLNNKFHRSLEAPVTESLLKAIFNDEEKFSVHSALPQVALLGDEGAANHNRLGGHYGEPGMQLFVYGREKGNDTRPSRYPARQTREASEAVARLNQVNPQQVIFAQQNPDVIDQGVFHNDVIAVSNRQVLFCHQQAFARQSQLLANLRARVNGFMAIEVPATQVSVSDAVSTYLFNSQLLSRDDGSMMLVLPQECREHAGVWCYLNELLAADNPISELKVFDLRESMANGGGPACLRLRVVLTEEERRAVNPAVMMNDTLFNALNDWGDRYYRDRLTDADLADPQLLREGREALDVLSQLLNLGSVYPFQREGGGNG.

Substrate contacts are provided by residues 20-29 (AGLLFGNEAS), asparagine 111, and 138-139 (HR). The active site involves glutamate 175. Position 213 (arginine 213) interacts with substrate. Residue histidine 249 is part of the active site. Positions 251 and 360 each coordinate substrate. Residue cysteine 366 is the Nucleophile of the active site.

Belongs to the succinylarginine dihydrolase family. Homodimer.

The catalysed reaction is N(2)-succinyl-L-arginine + 2 H2O + 2 H(+) = N(2)-succinyl-L-ornithine + 2 NH4(+) + CO2. It participates in amino-acid degradation; L-arginine degradation via AST pathway; L-glutamate and succinate from L-arginine: step 2/5. In terms of biological role, catalyzes the hydrolysis of N(2)-succinylarginine into N(2)-succinylornithine, ammonia and CO(2). The sequence is that of N-succinylarginine dihydrolase from Shigella dysenteriae serotype 1 (strain Sd197).